The sequence spans 348 residues: MPAAPDKDKALELALAQIDKQYGKGSVMRLGEEGRAPIAVIPTGAIALDVALGIGGLPRGRVIEVYGPESSGKTTVALHAVANAQRNGGIAAFIDAEHALDPDYAKKLGVDTDALLVSQPDTGEQALEIADMLVRSGALDILVIDSVAALVPRAEIEGEMGDSHVGLQARLMSQALRKMTGAMNNSGTTAIFINQLREKIGVMFGSPETTTGGKALKFYASVRLDVRRIETLKDGGEAVGNRTRVKVVKNKMAPPFKQAEFDILYGHGISREGSLIDMGVDQAILRKSGAWYTYEGDQLGQGKENARKFLRDNPDIANEIEKRIKEKLGIGAQLDAEAVEAVPAPVDF.

Position 67 to 74 (67 to 74 (GPESSGKT)) interacts with ATP.

This sequence belongs to the RecA family.

It localises to the cytoplasm. Can catalyze the hydrolysis of ATP in the presence of single-stranded DNA, the ATP-dependent uptake of single-stranded DNA by duplex DNA, and the ATP-dependent hybridization of homologous single-stranded DNAs. It interacts with LexA causing its activation and leading to its autocatalytic cleavage. The sequence is that of Protein RecA from Amycolatopsis mediterranei (strain U-32).